We begin with the raw amino-acid sequence, 253 residues long: Sec-independent protein translocase protein TatC (253 aa).

6 consecutive transmembrane segments (helical) span residues 18–38 (VSVGTILVAFLGCFHFWKSIF), 69–89 (AIVISMPIIFWQLWLFIAPGL), 96–116 (VILPFVFFGSGMFLIGAAFSY), 151–171 (LILGFGVAFELPVLAYFLAKV), 187–207 (IVVIFIVAAIITPPDVVSQIF), and 208–228 (MALPLVGLYGLSILIAKMVNP). The disordered stretch occupies residues 231–253 (KDNENNNENNNENNTKENTKSES). A compositionally biased stretch (basic and acidic residues) spans 244–253 (NTKENTKSES).

The protein belongs to the TatC family. In terms of assembly, the Tat system comprises two distinct complexes: a TatABC complex, containing multiple copies of TatA, TatB and TatC subunits, and a separate TatA complex, containing only TatA subunits. Substrates initially bind to the TatABC complex, which probably triggers association of the separate TatA complex to form the active translocon.

It is found in the cell inner membrane. Functionally, part of the twin-arginine translocation (Tat) system that transports large folded proteins containing a characteristic twin-arginine motif in their signal peptide across membranes. Together with TatB, TatC is part of a receptor directly interacting with Tat signal peptides. The polypeptide is Sec-independent protein translocase protein TatC (Helicobacter pylori (strain ATCC 700392 / 26695) (Campylobacter pylori)).